Consider the following 406-residue polypeptide: Tryptophan synthase beta chain (406 aa).

K99 is subject to N6-(pyridoxal phosphate)lysine.

Belongs to the TrpB family. In terms of assembly, tetramer of two alpha and two beta chains. Pyridoxal 5'-phosphate is required as a cofactor.

The enzyme catalyses (1S,2R)-1-C-(indol-3-yl)glycerol 3-phosphate + L-serine = D-glyceraldehyde 3-phosphate + L-tryptophan + H2O. Its pathway is amino-acid biosynthesis; L-tryptophan biosynthesis; L-tryptophan from chorismate: step 5/5. Functionally, the beta subunit is responsible for the synthesis of L-tryptophan from indole and L-serine. The polypeptide is Tryptophan synthase beta chain (Brucella abortus (strain 2308)).